The primary structure comprises 173 residues: NADH-ubiquinone oxidoreductase chain 6 (173 aa).

A run of 5 helical transmembrane segments spans residues Met-1–Ser-21, Pro-25–Gly-45, Leu-53–Leu-73, Val-87–Gly-107, and Leu-139–Leu-159.

The protein belongs to the complex I subunit 6 family.

It localises to the mitochondrion membrane. It catalyses the reaction a ubiquinone + NADH + 5 H(+)(in) = a ubiquinol + NAD(+) + 4 H(+)(out). In terms of biological role, core subunit of the mitochondrial membrane respiratory chain NADH dehydrogenase (Complex I) that is believed to belong to the minimal assembly required for catalysis. Complex I functions in the transfer of electrons from NADH to the respiratory chain. The immediate electron acceptor for the enzyme is believed to be ubiquinone. In Gadus morhua (Atlantic cod), this protein is NADH-ubiquinone oxidoreductase chain 6 (MT-ND6).